The primary structure comprises 524 residues: Ribonuclease Y (524 aa).

Residues 3–23 (IVINLLLLVLAALVAFVAGFF) form a helical membrane-spanning segment. The KH domain maps to 214–280 (ALSVVHIQSD…KLTLKKLLAD (67 aa)). The HD domain maps to 340-432 (LLQHSREVAM…VDAANTISLS (93 aa)).

It belongs to the RNase Y family.

It localises to the cell membrane. In terms of biological role, endoribonuclease that initiates mRNA decay. This is Ribonuclease Y from Chlorobium chlorochromatii (strain CaD3).